The primary structure comprises 166 residues: Small ribosomal subunit protein uS5 (166 aa).

Residues 12–75 (YIEKLVQVNR…EAARRNMIQV (64 aa)) form the S5 DRBM domain.

Belongs to the universal ribosomal protein uS5 family. In terms of assembly, part of the 30S ribosomal subunit. Contacts proteins S4 and S8.

Functionally, with S4 and S12 plays an important role in translational accuracy. Its function is as follows. Located at the back of the 30S subunit body where it stabilizes the conformation of the head with respect to the body. This Pseudomonas fluorescens (strain ATCC BAA-477 / NRRL B-23932 / Pf-5) protein is Small ribosomal subunit protein uS5.